A 308-amino-acid chain; its full sequence is Aspartate carbamoyltransferase catalytic subunit (308 aa).

Carbamoyl phosphate is bound by residues R59 and T60. K87 contacts L-aspartate. 3 residues coordinate carbamoyl phosphate: R109, H139, and Q142. Residues R172 and R224 each contribute to the L-aspartate site. Residues A265 and P266 each coordinate carbamoyl phosphate.

This sequence belongs to the aspartate/ornithine carbamoyltransferase superfamily. ATCase family. As to quaternary structure, heterododecamer (2C3:3R2) of six catalytic PyrB chains organized as two trimers (C3), and six regulatory PyrI chains organized as three dimers (R2).

It carries out the reaction carbamoyl phosphate + L-aspartate = N-carbamoyl-L-aspartate + phosphate + H(+). It participates in pyrimidine metabolism; UMP biosynthesis via de novo pathway; (S)-dihydroorotate from bicarbonate: step 2/3. In terms of biological role, catalyzes the condensation of carbamoyl phosphate and aspartate to form carbamoyl aspartate and inorganic phosphate, the committed step in the de novo pyrimidine nucleotide biosynthesis pathway. The protein is Aspartate carbamoyltransferase catalytic subunit of Streptococcus mutans serotype c (strain ATCC 700610 / UA159).